Reading from the N-terminus, the 432-residue chain is Transcriptional adapter 3 (432 aa).

Lys-21 participates in a covalent cross-link: Glycyl lysine isopeptide (Lys-Gly) (interchain with G-Cter in SUMO2). Residues 40–69 (IEELDTLQLELETLLSSASRRLRVLEAETQ) adopt a coiled-coil conformation. The segment at 87–127 (GRDHELGAPPKHGKPKKQKLEGKTGHGPGPGPGRPKSKNVQ) is disordered. A Glycyl lysine isopeptide (Lys-Gly) (interchain with G-Cter in SUMO2) cross-link involves residue Lys-129. The tract at residues 272–319 (NIISPMEDSPIPDMSGKESGADGASTSPRNQNKPFSVPHTKSLESRIK) is disordered. A phosphoserine mark is found at Ser-280 and Ser-298. Over residues 295–305 (ASTSPRNQNKP) the composition is skewed to polar residues. Positions 367 to 407 (LLRLAKEEVSRQELRQRVRMADNEVMDAFRKIMAARQKKRT) form a coiled coil. Position 418 is an N6-acetyllysine (Lys-418).

It belongs to the NGG1 family. The PCAF complex is composed of a number of TBP-associated factors (TAFS), such as TAF5, TAF5L, TAF6, TAF6L, TAF9, TAF10 and TAF12, PCAF, and also PCAF-associated factors (PAFs), such as TADA2L/ADA2, TADA3L/ADA3 and SPT3. Interacts directly with TADA2L and PCAF and also with the high-risk HPV oncoprotein E6. Component of the STAGA transcription coactivator-HAT complex, at least composed of SUPT3H, GCN5L2, TAF5L, TAF6L, SUPT7L, TADA3L, TAD1L, TAF10, TAF12, TRRAP and TAF9. Component of the TFTC-HAT complex. Component of the ADA2A-containing complex (ATAC), composed of KAT14, KAT2A, TADA2L, TADA3L, ZZ3, MBIP, WDR5, YEATS2, CCDC101 and DR1.

It is found in the nucleus. Functionally, functions as a component of the PCAF complex. The PCAF complex is capable of efficiently acetylating histones in a nucleosomal context. The PCAF complex could be considered as the human version of the yeast SAGA complex. Also known as a coactivator for p53/TP53-dependent transcriptional activation. Component of the ATAC complex, a complex with histone acetyltransferase activity on histones H3 and H4. This Mus musculus (Mouse) protein is Transcriptional adapter 3 (Tada3).